The following is a 280-amino-acid chain: Phosphonates import ATP-binding protein PhnC 1 (280 aa).

One can recognise an ABC transporter domain in the interval 3–247; the sequence is FRLDAASVSY…LLRELYASES (245 aa). 36–43 is a binding site for ATP; that stretch reads GPSGAGKT.

It belongs to the ABC transporter superfamily. Phosphonates importer (TC 3.A.1.9.1) family. As to quaternary structure, the complex is composed of two ATP-binding proteins (PhnC), two transmembrane proteins (PhnE) and a solute-binding protein (PhnD).

Its subcellular location is the cell inner membrane. It catalyses the reaction phosphonate(out) + ATP + H2O = phosphonate(in) + ADP + phosphate + H(+). Part of the ABC transporter complex PhnCDE involved in phosphonates import. Responsible for energy coupling to the transport system. The sequence is that of Phosphonates import ATP-binding protein PhnC 1 from Cupriavidus necator (strain ATCC 17699 / DSM 428 / KCTC 22496 / NCIMB 10442 / H16 / Stanier 337) (Ralstonia eutropha).